Here is a 185-residue protein sequence, read N- to C-terminus: Ribosome-recycling factor (185 aa).

The protein belongs to the RRF family.

It localises to the cytoplasm. Functionally, responsible for the release of ribosomes from messenger RNA at the termination of protein biosynthesis. May increase the efficiency of translation by recycling ribosomes from one round of translation to another. This chain is Ribosome-recycling factor, found in Buchnera aphidicola subsp. Acyrthosiphon pisum (strain 5A).